Consider the following 148-residue polypeptide: MAEEQAQPQLALERIYVKDMSLEVPGAGVFTKEWNPELDINLSSNAEKLDDDHYQVVLTVSVTAKNAEEAAFIAEVHQAGIFLLKDIPEDQIGQILGAYCPNVLFPYAREVISDIVTRGSFPQLLLAPVNFDQAYAQSQQQVDAEGNA.

This sequence belongs to the SecB family. In terms of assembly, homotetramer, a dimer of dimers. One homotetramer interacts with 1 SecA dimer.

The protein localises to the cytoplasm. Functionally, one of the proteins required for the normal export of preproteins out of the cell cytoplasm. It is a molecular chaperone that binds to a subset of precursor proteins, maintaining them in a translocation-competent state. It also specifically binds to its receptor SecA. This Psychrobacter arcticus (strain DSM 17307 / VKM B-2377 / 273-4) protein is Protein-export protein SecB.